The primary structure comprises 557 residues: Aerobic glycerol-3-phosphate dehydrogenase (557 aa).

21–49 contacts FAD; the sequence is DLVIIGGGITGAGIALDASERGMKVALVE.

Belongs to the FAD-dependent glycerol-3-phosphate dehydrogenase family. Requires FAD as cofactor.

It is found in the cytoplasm. It carries out the reaction a quinone + sn-glycerol 3-phosphate = dihydroxyacetone phosphate + a quinol. It functions in the pathway polyol metabolism; glycerol degradation via glycerol kinase pathway; glycerone phosphate from sn-glycerol 3-phosphate (aerobic route): step 1/1. This chain is Aerobic glycerol-3-phosphate dehydrogenase (glpD), found in Staphylococcus aureus (strain USA300).